We begin with the raw amino-acid sequence, 281 residues long: 2-C-methyl-D-erythritol 4-phosphate cytidylyltransferase (281 aa).

This sequence belongs to the IspD/TarI cytidylyltransferase family. IspD subfamily.

The enzyme catalyses 2-C-methyl-D-erythritol 4-phosphate + CTP + H(+) = 4-CDP-2-C-methyl-D-erythritol + diphosphate. It participates in isoprenoid biosynthesis; isopentenyl diphosphate biosynthesis via DXP pathway; isopentenyl diphosphate from 1-deoxy-D-xylulose 5-phosphate: step 2/6. Catalyzes the formation of 4-diphosphocytidyl-2-C-methyl-D-erythritol from CTP and 2-C-methyl-D-erythritol 4-phosphate (MEP). The sequence is that of 2-C-methyl-D-erythritol 4-phosphate cytidylyltransferase from Psychrobacter arcticus (strain DSM 17307 / VKM B-2377 / 273-4).